The sequence spans 198 residues: MSISLLGRIVSQQFSGIRAAGPGRSLYLPFTLLLKQPGAYKVNLHRYVHSTQTKSHLSFLMNNNDITPFQKFTVKVLKEQCKSRGLKLSGRKSDLLQRLITHDSCSNKKSSVKINEPKKKRILINDPIKITKKLVSDKTFRTIEKNISSLQNTPVIETPCDVHSHLQPRDRIFLLGFFMLSCLWWNLEPQESKPTIDH.

Residues 1 to 55 (MSISLLGRIVSQQFSGIRAAGPGRSLYLPFTLLLKQPGAYKVNLHRYVHSTQTKS) constitute a mitochondrion transit peptide. Residues 69 to 103 (FQKFTVKVLKEQCKSRGLKLSGRKSDLLQRLITHD) form the SAP domain. Residues 172–187 (IFLLGFFMLSCLWWNL) form a helical membrane-spanning segment.

It belongs to the AIM34 family.

It is found in the mitochondrion membrane. This Saccharomyces cerevisiae (strain RM11-1a) (Baker's yeast) protein is Altered inheritance of mitochondria protein 34, mitochondrial (AIM34).